A 1141-amino-acid polypeptide reads, in one-letter code: DNA polymerase II large subunit (1141 aa).

Residues 567 to 587 (AGTRVGGRMGRPGKSAPRKMK) are disordered.

The protein belongs to the archaeal DNA polymerase II family. As to quaternary structure, heterodimer of a large subunit and a small subunit.

It catalyses the reaction DNA(n) + a 2'-deoxyribonucleoside 5'-triphosphate = DNA(n+1) + diphosphate. It carries out the reaction Exonucleolytic cleavage in the 3'- to 5'-direction to yield nucleoside 5'-phosphates.. Possesses two activities: a DNA synthesis (polymerase) and an exonucleolytic activity that degrades single-stranded DNA in the 3'- to 5'-direction. Has a template-primer preference which is characteristic of a replicative DNA polymerase. The chain is DNA polymerase II large subunit from Methanocorpusculum labreanum (strain ATCC 43576 / DSM 4855 / Z).